A 522-amino-acid chain; its full sequence is Lysine--tRNA ligase (522 aa).

A 'HIGH' region motif is present at residues 44–52; it reads PSGLPHIGT. The 'KMSKS' region motif lies at 290-294; sequence KISKS. Lys-293 is a binding site for ATP.

It belongs to the class-I aminoacyl-tRNA synthetase family.

It localises to the cytoplasm. The enzyme catalyses tRNA(Lys) + L-lysine + ATP = L-lysyl-tRNA(Lys) + AMP + diphosphate. The polypeptide is Lysine--tRNA ligase (Rickettsia africae (strain ESF-5)).